A 266-amino-acid chain; its full sequence is Hydroxyethylthiazole kinase (266 aa).

Met-46 is a binding site for substrate. Residues Lys-122 and Thr-166 each coordinate ATP. Gly-193 provides a ligand contact to substrate.

It belongs to the Thz kinase family. Requires Mg(2+) as cofactor.

It carries out the reaction 5-(2-hydroxyethyl)-4-methylthiazole + ATP = 4-methyl-5-(2-phosphooxyethyl)-thiazole + ADP + H(+). It functions in the pathway cofactor biosynthesis; thiamine diphosphate biosynthesis; 4-methyl-5-(2-phosphoethyl)-thiazole from 5-(2-hydroxyethyl)-4-methylthiazole: step 1/1. Its function is as follows. Catalyzes the phosphorylation of the hydroxyl group of 4-methyl-5-beta-hydroxyethylthiazole (THZ). This Caldivirga maquilingensis (strain ATCC 700844 / DSM 13496 / JCM 10307 / IC-167) protein is Hydroxyethylthiazole kinase.